Consider the following 103-residue polypeptide: Pyrimidine/purine nucleoside phosphorylase (103 aa).

It belongs to the nucleoside phosphorylase PpnP family.

It catalyses the reaction a purine D-ribonucleoside + phosphate = a purine nucleobase + alpha-D-ribose 1-phosphate. The enzyme catalyses adenosine + phosphate = alpha-D-ribose 1-phosphate + adenine. It carries out the reaction cytidine + phosphate = cytosine + alpha-D-ribose 1-phosphate. The catalysed reaction is guanosine + phosphate = alpha-D-ribose 1-phosphate + guanine. It catalyses the reaction inosine + phosphate = alpha-D-ribose 1-phosphate + hypoxanthine. The enzyme catalyses thymidine + phosphate = 2-deoxy-alpha-D-ribose 1-phosphate + thymine. It carries out the reaction uridine + phosphate = alpha-D-ribose 1-phosphate + uracil. The catalysed reaction is xanthosine + phosphate = alpha-D-ribose 1-phosphate + xanthine. Functionally, catalyzes the phosphorolysis of diverse nucleosides, yielding D-ribose 1-phosphate and the respective free bases. Can use uridine, adenosine, guanosine, cytidine, thymidine, inosine and xanthosine as substrates. Also catalyzes the reverse reactions. The sequence is that of Pyrimidine/purine nucleoside phosphorylase from Shewanella baltica (strain OS223).